The chain runs to 122 residues: Large ribosomal subunit protein uL14 (122 aa).

This sequence belongs to the universal ribosomal protein uL14 family. In terms of assembly, part of the 50S ribosomal subunit. Forms a cluster with proteins L3 and L19. In the 70S ribosome, L14 and L19 interact and together make contacts with the 16S rRNA in bridges B5 and B8.

Functionally, binds to 23S rRNA. Forms part of two intersubunit bridges in the 70S ribosome. This is Large ribosomal subunit protein uL14 from Shewanella halifaxensis (strain HAW-EB4).